The chain runs to 603 residues: UvrABC system protein C (603 aa).

Residues 13–92 enclose the GIY-YIG domain; sequence SSPGVYLMKD…IKQHHPKYNV (80 aa). A UVR domain is found at 205–240; that stretch reads EEVVKDLEKVIQKASDNLEFEQAANYYRTLSLIKQA.

The protein belongs to the UvrC family. As to quaternary structure, interacts with UvrB in an incision complex.

It localises to the cytoplasm. Functionally, the UvrABC repair system catalyzes the recognition and processing of DNA lesions. UvrC both incises the 5' and 3' sides of the lesion. The N-terminal half is responsible for the 3' incision and the C-terminal half is responsible for the 5' incision. The polypeptide is UvrABC system protein C (Chlamydia pneumoniae (Chlamydophila pneumoniae)).